The sequence spans 398 residues: CCA-adding enzyme (398 aa).

The ATP site is built by glycine 32 and arginine 35. Residues glycine 32 and arginine 35 each contribute to the CTP site. 2 residues coordinate Mg(2+): aspartate 45 and aspartate 47. The ATP site is built by arginine 116, aspartate 159, arginine 162, arginine 165, and arginine 168. Residues arginine 116, aspartate 159, arginine 162, arginine 165, and arginine 168 each contribute to the CTP site.

The protein belongs to the tRNA nucleotidyltransferase/poly(A) polymerase family. Bacterial CCA-adding enzyme type 3 subfamily. As to quaternary structure, homodimer. It depends on Mg(2+) as a cofactor.

It catalyses the reaction a tRNA precursor + 2 CTP + ATP = a tRNA with a 3' CCA end + 3 diphosphate. It carries out the reaction a tRNA with a 3' CCA end + 2 CTP + ATP = a tRNA with a 3' CCACCA end + 3 diphosphate. Functionally, catalyzes the addition and repair of the essential 3'-terminal CCA sequence in tRNAs without using a nucleic acid template. Adds these three nucleotides in the order of C, C, and A to the tRNA nucleotide-73, using CTP and ATP as substrates and producing inorganic pyrophosphate. tRNA 3'-terminal CCA addition is required both for tRNA processing and repair. Also involved in tRNA surveillance by mediating tandem CCA addition to generate a CCACCA at the 3' terminus of unstable tRNAs. While stable tRNAs receive only 3'-terminal CCA, unstable tRNAs are marked with CCACCA and rapidly degraded. The protein is CCA-adding enzyme of Lactobacillus johnsonii (strain CNCM I-12250 / La1 / NCC 533).